A 447-amino-acid polypeptide reads, in one-letter code: MAHHPKRKPLSQEPQKASIEALTHEGRGIAHVAGKTVFIDGALPGETVWFHYLRRRGKFDEGRVLEVLQPAPSRVEPRCRHFGVCGGCSLQHLSTAAQLQLKQVTVREQFRHFGGVEPEQWLPPLVGGGYWGYRYKARLGVKFVKKKDRVLVGFREKGSSLIAALEGCEVLHPSVGYLLPALGELIASLSCYDRIPQIEVAAGDQSTGLVFRHLVPLTTADTEQLVAFGQAHKLQIYLQGGGAETVRLLWPAGARLSYSQFGKLEMIFLPTDFTQVNREVNTKMVRRVLELLEIKSGERVLDLFCGIGNFTLPLAIAGAEVVGIEGNAGLVARAVANATHNRLENAYFEMADLNGAEWTHYVWAREGFSKALLDPPRSGALLAVQQMSKLRVQRIVYVSCNPATLARDAGELVNRQGYRLRYAGVIDMFPHTTHVETLALFEQTRKH.

A TRAM domain is found at 7 to 66 (RKPLSQEPQKASIEALTHEGRGIAHVAGKTVFIDGALPGETVWFHYLRRRGKFDEGRVLE). [4Fe-4S] cluster is bound by residues C79, C85, C88, and C168. S-adenosyl-L-methionine-binding residues include Q275, F304, N309, E325, D352, and D374. Catalysis depends on C400, which acts as the Nucleophile.

This sequence belongs to the class I-like SAM-binding methyltransferase superfamily. RNA M5U methyltransferase family. RlmD subfamily.

It catalyses the reaction uridine(1939) in 23S rRNA + S-adenosyl-L-methionine = 5-methyluridine(1939) in 23S rRNA + S-adenosyl-L-homocysteine + H(+). In terms of biological role, catalyzes the formation of 5-methyl-uridine at position 1939 (m5U1939) in 23S rRNA. In Nitrosococcus oceani (strain ATCC 19707 / BCRC 17464 / JCM 30415 / NCIMB 11848 / C-107), this protein is 23S rRNA (uracil(1939)-C(5))-methyltransferase RlmD.